A 189-amino-acid polypeptide reads, in one-letter code: Large ribosomal subunit protein uL10 (189 aa).

This sequence belongs to the universal ribosomal protein uL10 family. In terms of assembly, part of the ribosomal stalk of the 50S ribosomal subunit. The N-terminus interacts with L11 and the large rRNA to form the base of the stalk. The C-terminus forms an elongated spine to which L12 dimers bind in a sequential fashion forming a multimeric L10(L12)X complex.

Forms part of the ribosomal stalk, playing a central role in the interaction of the ribosome with GTP-bound translation factors. The chain is Large ribosomal subunit protein uL10 from Rippkaea orientalis (strain PCC 8801 / RF-1) (Cyanothece sp. (strain PCC 8801)).